The sequence spans 64 residues: Large ribosomal subunit protein bL35 (64 aa).

The interval 1–55 (MPKMKTNKSVSARFKLTASGQLKRTRPGKRHKLSKKSSQEKRNLSKQPLVDKGQV) is disordered. Residues 23–35 (KRTRPGKRHKLSK) are compositionally biased toward basic residues.

The protein belongs to the bacterial ribosomal protein bL35 family.

The protein is Large ribosomal subunit protein bL35 of Chlamydia pneumoniae (Chlamydophila pneumoniae).